The sequence spans 315 residues: Olfactory receptor 3A1 (315 aa).

Topologically, residues 1–28 (MQPESGANGTVIAEFILLGLLEAPGLQP) are extracellular. N-linked (GlcNAc...) asparagine glycosylation is present at asparagine 8. The helical transmembrane segment at 29–52 (VVFVLFLFAYLVTVRGNLSILAAV) threads the bilayer. The Cytoplasmic portion of the chain corresponds to 53–60 (LVEPKLHT). The helical transmembrane segment at 61–82 (PMYFFLGNLSVLDVGCISVTVP) threads the bilayer. The Extracellular segment spans residues 83 to 103 (SMLSRLLSRKRAVPCGACLTQ). Cysteine 100 and cysteine 192 form a disulfide bridge. The helical transmembrane segment at 104–123 (LFFFHLFVGVDCFLLTAMAY) threads the bilayer. Residues 124-143 (DRFLAICRPLTYSTRMSQTV) lie on the Cytoplasmic side of the membrane. The helical transmembrane segment at 144-161 (QRMLVAASWACAFTNALT) threads the bilayer. Residues 162–199 (HTVAMSTLNFCGPNVINHFYCDLPQLFQLSCSSTQLNE) are Extracellular-facing. The helical transmembrane segment at 200-223 (LLLFAVGFIMAGTPMALIVISYIH) threads the bilayer. Residues 224-240 (VAAAVLRIRSVEGRKKA) are Cytoplasmic-facing. A helical transmembrane segment spans residues 241–264 (FSTCGSHLTVVAIFYGSGIFNYMR). Residues 265 to 275 (LGSTKLSDKDK) lie on the Extracellular side of the membrane. Residues 276–295 (AVGIFNTVINPMLNPIIYSF) form a helical membrane-spanning segment. Topologically, residues 296–315 (RNPDVQSAIWRMLTGRRSLA) are cytoplasmic.

The protein belongs to the G-protein coupled receptor 1 family.

It is found in the cell membrane. Its function is as follows. Odorant receptor. In Homo sapiens (Human), this protein is Olfactory receptor 3A1 (OR3A1).